Here is a 485-residue protein sequence, read N- to C-terminus: Hydrogenase transcriptional regulatory protein HoxA (485 aa).

The Response regulatory domain maps to 6 to 120 (TILVVDDEVR…QLVETVKEAV (115 aa)). Aspartate 54 bears the 4-aspartylphosphate mark. The region spanning 166 to 392 (STESPMHAVI…ELQNEIQRMA (227 aa)) is the Sigma-54 factor interaction domain. ATP contacts are provided by residues 192 to 199 (GESGTGKE) and 264 to 273 (EIGETSPAFQ). Positions 404–426 (PLLGRRNGKRSAPLPAHGRLNGS) are disordered. Positions 451-470 (NISRVASELGLSRVGLRNKL) form a DNA-binding region, H-T-H motif.

The protein localises to the cytoplasm. Functionally, probable member of the two-component regulatory system involved in the regulation of the hydrogenase activity. HoxA is probably phosphorylated by a sensory component (which could be HoxX) and then acts in conjunction with sigma-54 as a transcriptional activator. The polypeptide is Hydrogenase transcriptional regulatory protein HoxA (hoxA) (Bradyrhizobium diazoefficiens (strain JCM 10833 / BCRC 13528 / IAM 13628 / NBRC 14792 / USDA 110)).